The following is a 364-amino-acid chain: tRNA-specific 2-thiouridylase MnmA (364 aa).

Residues 13–20 (GMSGGVDS) and M39 each bind ATP. The interval 99-101 (NPD) is interaction with target base in tRNA. C104 (nucleophile) is an active-site residue. C104 and C199 are joined by a disulfide. G128 contacts ATP. An interaction with tRNA region spans residues 149–151 (KDQ). Residue C199 is the Cysteine persulfide intermediate of the active site. Residues 311 to 312 (RY) are interaction with tRNA.

The protein belongs to the MnmA/TRMU family.

Its subcellular location is the cytoplasm. It carries out the reaction S-sulfanyl-L-cysteinyl-[protein] + uridine(34) in tRNA + AH2 + ATP = 2-thiouridine(34) in tRNA + L-cysteinyl-[protein] + A + AMP + diphosphate + H(+). In terms of biological role, catalyzes the 2-thiolation of uridine at the wobble position (U34) of tRNA, leading to the formation of s(2)U34. The polypeptide is tRNA-specific 2-thiouridylase MnmA (Alcanivorax borkumensis (strain ATCC 700651 / DSM 11573 / NCIMB 13689 / SK2)).